The primary structure comprises 101 residues: Small ribosomal subunit protein uS10 (101 aa).

The protein belongs to the universal ribosomal protein uS10 family. As to quaternary structure, part of the 30S ribosomal subunit.

Functionally, involved in the binding of tRNA to the ribosomes. This is Small ribosomal subunit protein uS10 from Rhodococcus erythropolis (strain PR4 / NBRC 100887).